Here is a 196-residue protein sequence, read N- to C-terminus: MRVKICGITNLRDALHAVECGADALGFVFYNESPRYITPKDAKRIIDQLPPFVERVGLFVNEGVETIDTVCRYSDISLAQIHFDVDEESLDAISLKTLPVVRARTAEDVHRFPDRYRLVDAYCEAYGGSGKRLNLEWFDGVDCSRIILAGGLTPDNVNEVKQYGFYGVDVSSGVESVKGKKDLQKVERFLRNAKSL.

The protein belongs to the TrpF family.

The catalysed reaction is N-(5-phospho-beta-D-ribosyl)anthranilate = 1-(2-carboxyphenylamino)-1-deoxy-D-ribulose 5-phosphate. The protein operates within amino-acid biosynthesis; L-tryptophan biosynthesis; L-tryptophan from chorismate: step 3/5. The sequence is that of N-(5'-phosphoribosyl)anthranilate isomerase from Sulfurovum sp. (strain NBC37-1).